A 459-amino-acid chain; its full sequence is Phosphomethylpyrimidine synthase (459 aa).

Substrate is bound by residues Asn-80, Met-109, Tyr-139, His-175, 195–197 (SRG), 236–239 (DSLR), and Glu-275. His-279 contacts Zn(2+). Residue Tyr-302 coordinates substrate. Residue His-343 participates in Zn(2+) binding. Cys-423, Cys-426, and Cys-431 together coordinate [4Fe-4S] cluster.

It belongs to the ThiC family. [4Fe-4S] cluster is required as a cofactor.

The enzyme catalyses 5-amino-1-(5-phospho-beta-D-ribosyl)imidazole + S-adenosyl-L-methionine = 4-amino-2-methyl-5-(phosphooxymethyl)pyrimidine + CO + 5'-deoxyadenosine + formate + L-methionine + 3 H(+). Its pathway is cofactor biosynthesis; thiamine diphosphate biosynthesis. In terms of biological role, catalyzes the synthesis of the hydroxymethylpyrimidine phosphate (HMP-P) moiety of thiamine from aminoimidazole ribotide (AIR) in a radical S-adenosyl-L-methionine (SAM)-dependent reaction. The polypeptide is Phosphomethylpyrimidine synthase (Gloeothece citriformis (strain PCC 7424) (Cyanothece sp. (strain PCC 7424))).